A 157-amino-acid polypeptide reads, in one-letter code: UPF0262 protein RL0614 (157 aa).

It belongs to the UPF0262 family.

The protein is UPF0262 protein RL0614 of Rhizobium johnstonii (strain DSM 114642 / LMG 32736 / 3841) (Rhizobium leguminosarum bv. viciae).